The chain runs to 375 residues: Trichodiene synthase (375 aa).

This sequence belongs to the trichodiene synthase family.

It carries out the reaction (2E,6E)-farnesyl diphosphate = trichodiene + diphosphate. It functions in the pathway sesquiterpene biosynthesis; trichothecene biosynthesis. Functionally, TS is a member of the terpene cyclase group of enzymes. It catalyzes the isomerization and cyclization of farnesyl pyro-phosphate to form trichodiene, the first cyclic intermediate in the biosynthetic pathway for trichothecenes. It serves to branch trichothecene biosynthesis from the isoprenoid pathway. This chain is Trichodiene synthase (TRI5), found in Fusarium cerealis (Fusarium crookwellense).